Consider the following 303-residue polypeptide: Methionyl-tRNA formyltransferase (303 aa).

108–111 (SDLP) serves as a coordination point for (6S)-5,6,7,8-tetrahydrofolate.

The protein belongs to the Fmt family.

The enzyme catalyses L-methionyl-tRNA(fMet) + (6R)-10-formyltetrahydrofolate = N-formyl-L-methionyl-tRNA(fMet) + (6S)-5,6,7,8-tetrahydrofolate + H(+). In terms of biological role, attaches a formyl group to the free amino group of methionyl-tRNA(fMet). The formyl group appears to play a dual role in the initiator identity of N-formylmethionyl-tRNA by promoting its recognition by IF2 and preventing the misappropriation of this tRNA by the elongation apparatus. The chain is Methionyl-tRNA formyltransferase from Rickettsia rickettsii (strain Iowa).